A 585-amino-acid polypeptide reads, in one-letter code: Formate--tetrahydrofolate ligase (585 aa).

74 to 81 (TPLGEGKT) provides a ligand contact to ATP.

This sequence belongs to the formate--tetrahydrofolate ligase family.

The enzyme catalyses (6S)-5,6,7,8-tetrahydrofolate + formate + ATP = (6R)-10-formyltetrahydrofolate + ADP + phosphate. The protein operates within one-carbon metabolism; tetrahydrofolate interconversion. This chain is Formate--tetrahydrofolate ligase, found in Yersinia enterocolitica serotype O:8 / biotype 1B (strain NCTC 13174 / 8081).